The chain runs to 248 residues: Triosephosphate isomerase (248 aa).

9 to 11 (NWK) serves as a coordination point for substrate. The Electrophile role is filled by H92. E164 functions as the Proton acceptor in the catalytic mechanism. Residues G170, S210, and 231–232 (GG) each bind substrate.

The protein belongs to the triosephosphate isomerase family. In terms of assembly, homodimer.

It is found in the cytoplasm. The enzyme catalyses D-glyceraldehyde 3-phosphate = dihydroxyacetone phosphate. It participates in carbohydrate biosynthesis; gluconeogenesis. The protein operates within carbohydrate degradation; glycolysis; D-glyceraldehyde 3-phosphate from glycerone phosphate: step 1/1. Functionally, involved in the gluconeogenesis. Catalyzes stereospecifically the conversion of dihydroxyacetone phosphate (DHAP) to D-glyceraldehyde-3-phosphate (G3P). This Mycoplasma capricolum subsp. capricolum (strain California kid / ATCC 27343 / NCTC 10154) protein is Triosephosphate isomerase.